Reading from the N-terminus, the 267-residue chain is Phosphate import ATP-binding protein PstB (267 aa).

The ABC transporter domain maps to I21–I262. G53–S60 is an ATP binding site.

Belongs to the ABC transporter superfamily. Phosphate importer (TC 3.A.1.7) family. In terms of assembly, the complex is composed of two ATP-binding proteins (PstB), two transmembrane proteins (PstC and PstA) and a solute-binding protein (PstS).

It localises to the cell inner membrane. The catalysed reaction is phosphate(out) + ATP + H2O = ADP + 2 phosphate(in) + H(+). Functionally, part of the ABC transporter complex PstSACB involved in phosphate import. Responsible for energy coupling to the transport system. In Mesorhizobium japonicum (strain LMG 29417 / CECT 9101 / MAFF 303099) (Mesorhizobium loti (strain MAFF 303099)), this protein is Phosphate import ATP-binding protein PstB.